The following is a 443-amino-acid chain: Ribosomal protein uS12 methylthiotransferase RimO (443 aa).

The region spanning 5-115 (PNIGFISLGC…VMKHVHKYVP (111 aa)) is the MTTase N-terminal domain. Positions 14, 50, 79, 147, 151, and 154 each coordinate [4Fe-4S] cluster. In terms of domain architecture, Radical SAM core spans 133 to 374 (LTPKHYAYLK…MQVQQRISAA (242 aa)). Residues 377-443 (QQKVGKTLAV…ADEYDLWGTC (67 aa)) enclose the TRAM domain.

Belongs to the methylthiotransferase family. RimO subfamily. Requires [4Fe-4S] cluster as cofactor.

It is found in the cytoplasm. The catalysed reaction is L-aspartate(89)-[ribosomal protein uS12]-hydrogen + (sulfur carrier)-SH + AH2 + 2 S-adenosyl-L-methionine = 3-methylsulfanyl-L-aspartate(89)-[ribosomal protein uS12]-hydrogen + (sulfur carrier)-H + 5'-deoxyadenosine + L-methionine + A + S-adenosyl-L-homocysteine + 2 H(+). In terms of biological role, catalyzes the methylthiolation of an aspartic acid residue of ribosomal protein uS12. This chain is Ribosomal protein uS12 methylthiotransferase RimO, found in Actinobacillus pleuropneumoniae serotype 5b (strain L20).